Reading from the N-terminus, the 228-residue chain is ATP-dependent dethiobiotin synthetase BioD (228 aa).

An ATP-binding site is contributed by 12–17 (EIGKTT). Thr16 is a binding site for Mg(2+). Residue Lys37 is part of the active site. Position 41 (Ser41) interacts with substrate. ATP contacts are provided by residues Asp54, 116–119 (EGAG), and 205–207 (PRL). 2 residues coordinate Mg(2+): Asp54 and Glu116.

It belongs to the dethiobiotin synthetase family. As to quaternary structure, homodimer. Mg(2+) is required as a cofactor.

It is found in the cytoplasm. It catalyses the reaction (7R,8S)-7,8-diammoniononanoate + CO2 + ATP = (4R,5S)-dethiobiotin + ADP + phosphate + 3 H(+). It participates in cofactor biosynthesis; biotin biosynthesis; biotin from 7,8-diaminononanoate: step 1/2. Catalyzes a mechanistically unusual reaction, the ATP-dependent insertion of CO2 between the N7 and N8 nitrogen atoms of 7,8-diaminopelargonic acid (DAPA, also called 7,8-diammoniononanoate) to form a ureido ring. This is ATP-dependent dethiobiotin synthetase BioD from Pseudomonas aeruginosa (strain UCBPP-PA14).